We begin with the raw amino-acid sequence, 234 residues long: Adenosine 5'-phosphosulfate reductase (234 aa).

The [4Fe-4S] cluster site is built by cysteine 120, cysteine 121, cysteine 203, and cysteine 206. Cysteine 229 acts as the Nucleophile; cysteine thiosulfonate intermediate in catalysis.

Belongs to the PAPS reductase family. CysH subfamily. It depends on [4Fe-4S] cluster as a cofactor.

The protein localises to the cytoplasm. It carries out the reaction [thioredoxin]-disulfide + sulfite + AMP + 2 H(+) = adenosine 5'-phosphosulfate + [thioredoxin]-dithiol. The protein operates within sulfur metabolism; hydrogen sulfide biosynthesis; sulfite from sulfate. Catalyzes the formation of sulfite from adenosine 5'-phosphosulfate (APS) using thioredoxin as an electron donor. The chain is Adenosine 5'-phosphosulfate reductase from Bacillus cereus (strain B4264).